The primary structure comprises 98 residues: Large ribosomal subunit protein uL23 (98 aa).

It belongs to the universal ribosomal protein uL23 family. Part of the 50S ribosomal subunit. Contacts protein L29, and trigger factor when it is bound to the ribosome.

Its function is as follows. One of the early assembly proteins it binds 23S rRNA. One of the proteins that surrounds the polypeptide exit tunnel on the outside of the ribosome. Forms the main docking site for trigger factor binding to the ribosome. The chain is Large ribosomal subunit protein uL23 from Limosilactobacillus reuteri (strain DSM 20016) (Lactobacillus reuteri).